A 377-amino-acid chain; its full sequence is MVFAAIPSPSRGVVHLGPVPLRAYALMIIIGIVVAVVVTGRRLRARGMDPALAGEIAYWAVPFGIVGARIYHVLSTPDAYFGEHGHVADVVKIWNGGLGIWGAIAGGALGAWLAARRLGISLALFADAAAPGIILAQAIGRWGNWFNQELYGKPTTLPWAVRIDPAHRADPGVATYQPTFLYEFLWNLVVAAILLLVDRRHRLGRGRLFALYVALYTFGRLWIEMLRIDTADEILGLRVNIWTSAIVCVGAVVALLVVRRPVDPDVSPQEQRALGLVQDRTRRQPTDAAGETAGETRTATRHDDATDGVDVNGADVDGADPSNVNGANVNGADPVNVNVNDADGAGAGAGEQPVAGAENGAAAVSSGRTRVERPPAT.

4 helical membrane passes run 18 to 38 (PVPLRAYALMIIIGIVVAVVV), 48 to 68 (MDPALAGEIAYWAVPFGIVGA), 93 to 113 (IWNGGLGIWGAIAGGALGAWL), and 119 to 139 (GISLALFADAAAPGIILAQAI). Residue arginine 141 coordinates a 1,2-diacyl-sn-glycero-3-phospho-(1'-sn-glycerol). A run of 3 helical transmembrane segments spans residues 177–197 (QPTFLYEFLWNLVVAAILLLV), 208–228 (LFALYVALYTFGRLWIEMLRI), and 238–258 (RVNIWTSAIVCVGAVVALLVV). The segment at 265–377 (DVSPQEQRAL…RTRVERPPAT (113 aa)) is disordered. 2 stretches are compositionally biased toward low complexity: residues 288–297 (AAGETAGETR) and 308–344 (GVDVNGADVDGADPSNVNGANVNGADPVNVNVNDADG).

The protein belongs to the Lgt family.

It is found in the cell membrane. It catalyses the reaction L-cysteinyl-[prolipoprotein] + a 1,2-diacyl-sn-glycero-3-phospho-(1'-sn-glycerol) = an S-1,2-diacyl-sn-glyceryl-L-cysteinyl-[prolipoprotein] + sn-glycerol 1-phosphate + H(+). It functions in the pathway protein modification; lipoprotein biosynthesis (diacylglyceryl transfer). Functionally, catalyzes the transfer of the diacylglyceryl group from phosphatidylglycerol to the sulfhydryl group of the N-terminal cysteine of a prolipoprotein, the first step in the formation of mature lipoproteins. This chain is Phosphatidylglycerol--prolipoprotein diacylglyceryl transferase, found in Frankia alni (strain DSM 45986 / CECT 9034 / ACN14a).